A 287-amino-acid chain; its full sequence is uncharacterized protein (287 aa).

The 107-residue stretch at 133-239 folds into the THUMP domain; the sequence is CEVGKTKKMT…KNIIGISIVQ (107 aa). Positions 257–287 are disordered; it reads ENTKSIPNDSKLDNFDRDKNQIINDKAEHAE. The span at 266 to 287 shows a compositional bias: basic and acidic residues; sequence SKLDNFDRDKNQIINDKAEHAE.

This is an uncharacterized protein from Schizosaccharomyces pombe (strain 972 / ATCC 24843) (Fission yeast).